We begin with the raw amino-acid sequence, 327 residues long: MLVLRILSRVTRNAGIRSSLSAVTLPARNQTPVFSSRFHSLAHDFSHKLVPAQMSMMDSFALQRFNFSSSTSPESDEKKTHTEASKTSEEKPTAEANQPGLDSESKDSVTDSAKRKRKGAKGAASSSSESDSESDDDELSADDLVKLVAEKEELLSEKEEEIKQLKDKVLRTYAEMENVMDRTRRDAENTKKYAVQNFAKSLLDVADNLGRASSVVKESFSKLDTSEDSAGAAPLLKTLLEGVEMTEKQLAEVFKKFGMEKYDPINEPFDPNRHNAVFQVPDASKPEGTVAHVLKSGYTLYDRVIRPAEVGVTQGGENQEEKKESDA.

The N-terminal 39 residues, 1–39 (MLVLRILSRVTRNAGIRSSLSAVTLPARNQTPVFSSRFH), are a transit peptide targeting the mitochondrion. The interval 68-140 (SSSTSPESDE…DSESDDDELS (73 aa)) is disordered. Composition is skewed to basic and acidic residues over residues 75–93 (SDEKKTHTEASKTSEEKPT) and 103–113 (SESKDSVTDSA). The span at 130–140 (SDSESDDDELS) shows a compositional bias: acidic residues.

The protein belongs to the GrpE family. In terms of assembly, probable component of the PAM complex, at least composed of SSC1 (mtHsp70), MGE1, TIM44, PAM16/TIM16, PAM17 and PAM18/TIM14. Interacts with SSQ1.

It localises to the mitochondrion matrix. In terms of biological role, essential component of the PAM complex, a complex required for the translocation of transit peptide-containing proteins from the inner membrane into the mitochondrial matrix in an ATP-dependent manner. Seems to control the nucleotide-dependent binding of mitochondrial HSP70 to substrate proteins. Binds ATP. Interacts with copper ions Cu(2+). Confers thermotolerance to long-term exposure at moderately high temperature (TMHT at 35 degrees Celsius). This is GrpE protein homolog 2, mitochondrial from Arabidopsis thaliana (Mouse-ear cress).